A 269-amino-acid polypeptide reads, in one-letter code: Interleukin-1 beta (269 aa).

A propeptide spanning residues 1-116 (MAEVPELASE…TRNNDACVHD (116 aa)) is cleaved from the precursor.

The protein belongs to the IL-1 family. Monomer. In its precursor form, weakly interacts with full-length MEFV; the mature cytokine does not interact at all. Interacts with integrins ITGAV:ITGBV and ITGA5:ITGB1; integrin-binding is required for IL1B signaling. Interacts with cargo receptor TMED10; the interaction is direct and is required for the secretion of IL1B mature form. Interacts with HSP90AB1; the interaction facilitates cargo translocation into the ERGIC. Interacts with HSP90B1; the interaction facilitates cargo translocation into the ERGIC.

It is found in the cytoplasm. The protein localises to the cytosol. It localises to the secreted. Its subcellular location is the lysosome. The protein resides in the extracellular exosome. Its function is as follows. Potent pro-inflammatory cytokine. Initially discovered as the major endogenous pyrogen, induces prostaglandin synthesis, neutrophil influx and activation, T-cell activation and cytokine production, B-cell activation and antibody production, and fibroblast proliferation and collagen production. Promotes Th17 differentiation of T-cells. Synergizes with IL12/interleukin-12 to induce IFNG synthesis from T-helper 1 (Th1) cells. Plays a role in angiogenesis by inducing VEGF production synergistically with TNF and IL6. Involved in transduction of inflammation downstream of pyroptosis: its mature form is specifically released in the extracellular milieu by passing through the gasdermin-D (GSDMD) pore. The protein is Interleukin-1 beta (IL1B) of Macaca mulatta (Rhesus macaque).